The chain runs to 154 residues: Stigma-specific STIG1-like protein 3 (154 aa).

The signal sequence occupies residues 1–23 (MGHRNTVLTILLTISIAIMVLIA).

Belongs to the STIG1 family.

The chain is Stigma-specific STIG1-like protein 3 from Arabidopsis thaliana (Mouse-ear cress).